The primary structure comprises 200 residues: MPSLYLASGSPRRRELLTQIGVSFTVLNAQIDETPFDHETPAAYVERLALGKAQAGLSVLAAEQQACVMGADTAVVLDGRILGKPADEADALAMLTALSGREHEVMTAVALSDRHRSETRIVTSRVRFRPIQPHEAQAYWASGEPADKAGGYAIQGLAAIFVEGLQGSYSGVVGLPLCETAELLGHFGIPCWQCLEGDES.

Aspartate 72 serves as the catalytic Proton acceptor.

It belongs to the Maf family. YhdE subfamily. Requires a divalent metal cation as cofactor.

The protein localises to the cytoplasm. It catalyses the reaction dTTP + H2O = dTMP + diphosphate + H(+). It carries out the reaction UTP + H2O = UMP + diphosphate + H(+). Its function is as follows. Nucleoside triphosphate pyrophosphatase that hydrolyzes dTTP and UTP. May have a dual role in cell division arrest and in preventing the incorporation of modified nucleotides into cellular nucleic acids. This is dTTP/UTP pyrophosphatase from Pseudomonas savastanoi pv. phaseolicola (strain 1448A / Race 6) (Pseudomonas syringae pv. phaseolicola (strain 1448A / Race 6)).